Here is a 292-residue protein sequence, read N- to C-terminus: Norajmaline N-methyltransferase (292 aa).

Residues 71–80 form an SAM motif I region; it reads KNMLDIGCGV. Residues 134 to 142 form an SAM motif II region; the sequence is KDGTFDLVL. The short motif at 135-141 is the Vacuolar targeting signal element; the sequence is DGTFDLV. The tract at residues 161-170 is SAM motif III; sequence IRVAAPGAPI.

The protein belongs to the class I-like SAM-binding methyltransferase superfamily. gTMT family. Homodimer. As to expression, mainly expressed in mature roots and, to a lesser extent, in leaves, stems and flowers.

The protein localises to the vacuole membrane. The enzyme catalyses norajmaline + S-adenosyl-L-methionine = ajmaline + S-adenosyl-L-homocysteine + H(+). It carries out the reaction 4-methylnorajmaline + S-adenosyl-L-methionine = 4-methylajmaline + S-adenosyl-L-homocysteine + H(+). Its pathway is alkaloid biosynthesis; ajmaline biosynthesis. Its function is as follows. N-methyltransferase involved in the biosynthesis of ajmaline-type monoterpenoid indole alkaloids (MIAs) natural products, important plant-derived pharmaceuticals used in the therapy of heart disorders. Catalyzes the indole N-methylation of norajmaline to produce ajmaline. Also able, with a lower efficiency, to mediates the conversion of 4-methylnorajmaline to 4-methylajmaline. The polypeptide is Norajmaline N-methyltransferase (Rauvolfia serpentina (Serpentine wood)).